Here is a 772-residue protein sequence, read N- to C-terminus: E3 ubiquitin-protein ligase UHRF1 (772 aa).

In terms of domain architecture, Ubiquitin-like spans 1–77 (MWIQVRTMDG…IVQLLVRQIP (77 aa)). Positions 90-111 (SDASAGCGSGQRDSDSGSGEGA) are disordered. Tudor-like regions lie at residues 129-205 (SLYK…LRAR) and 212-281 (EIKV…IEEP). The tract at residues 291-299 (PQKRQNGPE) is linker. The PHD-type zinc finger occupies 297 to 364 (GPECKHCKDN…DWYCPDCRND (68 aa)). Histone H3R2me0 binding stretches follow at residues 331–335 (CDECD) and 351–353 (PQD). A YDG domain is found at 417-580 (GPIPGVPVGT…FLVWRYLLRR (164 aa)). Residues 443-444 (HV) are required to promote base flipping. Residues 461 to 462 (AG) and D467 contribute to the DNA site. Required for formation of a 5-methylcytosine-binding pocket stretches follow at residues 464–467 (YEDD) and 476–479 (YTGS). Residues 615 to 626 (SKEREKENKTED) show a composition bias toward basic and acidic residues. The tract at residues 615–649 (SKEREKENKTEDEPIDSPSKGKRKRNSDNEQTAAK) is disordered. The RING-type zinc-finger motif lies at 703–742 (CICCQEVVYEPVTTECHHNICKGCLDRSFKALVHSCPACR).

The protein resides in the nucleus. It carries out the reaction S-ubiquitinyl-[E2 ubiquitin-conjugating enzyme]-L-cysteine + [acceptor protein]-L-lysine = [E2 ubiquitin-conjugating enzyme]-L-cysteine + N(6)-ubiquitinyl-[acceptor protein]-L-lysine.. It participates in protein modification; protein ubiquitination. In terms of biological role, multidomain protein that acts as a key epigenetic regulator by bridging DNA methylation and chromatin modification. Specifically recognizes and binds hemimethylated DNA at replication forks via its YDG domain and recruits dnmt1 methyltransferase to ensure faithful propagation of the DNA methylation patterns through DNA replication. In addition to its role in maintenance of DNA methylation, also plays a key role in chromatin modification: through its tudor-like regions and PHD-type zinc fingers, specifically recognizes and binds histone H3 trimethylated at 'Lys-9' (H3K9me3) and unmethylated at 'Arg-2' (H3R2me0), respectively, and recruits chromatin proteins. Enriched in pericentric heterochromatin where it recruits different chromatin modifiers required for this chromatin replication. Also localizes to euchromatic regions where it negatively regulates transcription possibly by impacting DNA methylation and histone modifications. Has E3 ubiquitin-protein ligase activity by mediating the ubiquitination of target proteins. However, it is still unclear how E3 ubiquitin-protein ligase activity is related to its role in chromatin in vivo. In Xenopus laevis (African clawed frog), this protein is E3 ubiquitin-protein ligase UHRF1 (uhrf1).